The sequence spans 404 residues: Probable tRNA sulfurtransferase (404 aa).

One can recognise a THUMP domain in the interval 60–165; sequence QPIVEALKLV…DEAAYISYEE (106 aa). Residues 183–184, 208–209, R265, G287, and Q296 each bind ATP; these read ML and HF.

Belongs to the ThiI family.

Its subcellular location is the cytoplasm. It catalyses the reaction [ThiI sulfur-carrier protein]-S-sulfanyl-L-cysteine + a uridine in tRNA + 2 reduced [2Fe-2S]-[ferredoxin] + ATP + H(+) = [ThiI sulfur-carrier protein]-L-cysteine + a 4-thiouridine in tRNA + 2 oxidized [2Fe-2S]-[ferredoxin] + AMP + diphosphate. The catalysed reaction is [ThiS sulfur-carrier protein]-C-terminal Gly-Gly-AMP + S-sulfanyl-L-cysteinyl-[cysteine desulfurase] + AH2 = [ThiS sulfur-carrier protein]-C-terminal-Gly-aminoethanethioate + L-cysteinyl-[cysteine desulfurase] + A + AMP + 2 H(+). It participates in cofactor biosynthesis; thiamine diphosphate biosynthesis. In terms of biological role, catalyzes the ATP-dependent transfer of a sulfur to tRNA to produce 4-thiouridine in position 8 of tRNAs, which functions as a near-UV photosensor. Also catalyzes the transfer of sulfur to the sulfur carrier protein ThiS, forming ThiS-thiocarboxylate. This is a step in the synthesis of thiazole, in the thiamine biosynthesis pathway. The sulfur is donated as persulfide by IscS. This chain is Probable tRNA sulfurtransferase, found in Streptococcus pyogenes serotype M49 (strain NZ131).